We begin with the raw amino-acid sequence, 223 residues long: Large ribosomal subunit protein bL21 (223 aa).

A disordered region spans residues 110–149; that stretch reads TALKSTTAEPKAADAPKAKAKAAPKAEKAAAPKAEKAPAK. The span at 133-147 shows a compositional bias: basic and acidic residues; it reads PKAEKAAAPKAEKAP.

Belongs to the bacterial ribosomal protein bL21 family. In terms of assembly, part of the 50S ribosomal subunit. Contacts protein L20.

Functionally, this protein binds to 23S rRNA in the presence of protein L20. This chain is Large ribosomal subunit protein bL21, found in Maricaulis maris (strain MCS10) (Caulobacter maris).